The following is a 598-amino-acid chain: Torsin-1A-interacting protein 1 (598 aa).

At 1 to 351 (MAGEGRRAEA…PQNASFVKRN (351 aa)) the chain is on the nuclear side. Disordered regions lie at residues 19 to 254 (VTPR…RSSS) and 267 to 314 (QNFT…IYGS). A Phosphoserine modification is found at S60. Basic and acidic residues-rich tracts occupy residues 73 to 101 (LVDK…EVRE) and 115 to 124 (RPQEAEEMKT). 6 positions are modified to phosphoserine: S135, S143, S154, S156, S157, and S187. Polar residues predominate over residues 205 to 214 (EATSVQQKVN). S216 carries the phosphoserine modification. T221 is modified (phosphothreonine). Residues S227, S230, and S242 each carry the phosphoserine modification. The span at 238–250 (RSRDSDESGDKTT) shows a compositional bias: basic and acidic residues. Composition is skewed to polar residues over residues 277–287 (SVLSSGYQKTP) and 300–313 (RMQT…SIYG). S320 carries the phosphoserine modification. The disordered stretch occupies residues 322–341 (LKSELGNQSPSTSSQQVTGQ). K323 is covalently cross-linked (Glycyl lysine isopeptide (Lys-Gly) (interchain with G-Cter in SUMO2)). A compositionally biased stretch (polar residues) spans 326 to 341 (LGNQSPSTSSQQVTGQ). S330 carries the post-translational modification Phosphoserine. A helical membrane pass occupies residues 352-372 (WWWLLPLIAALASGSFWFFST). The tract at residues 371-598 (STPEVETTAV…ENALKRGICL (228 aa)) is interaction with TOR1A. The Perinuclear space segment spans residues 373–598 (PEVETTAVQE…ENALKRGICL (226 aa)). Residues 374–450 (EVETTAVQEF…SEQIADAYSS (77 aa)) are a coiled coil. An N-linked (GlcNAc...) asparagine glycan is attached at N414.

This sequence belongs to the TOR1AIP family. Interacts with ATP1B4. Interacts with TOR1A (ATP-bound). Interacts with TOR1B, TOR2A and TOR3A.

Its subcellular location is the nucleus inner membrane. In terms of biological role, required for nuclear membrane integrity. Induces TOR1A and TOR1B ATPase activity and is required for their location on the nuclear membrane. Binds to A- and B-type lamins. Possible role in membrane attachment and assembly of the nuclear lamina. This Pongo abelii (Sumatran orangutan) protein is Torsin-1A-interacting protein 1 (TOR1AIP1).